A 252-amino-acid polypeptide reads, in one-letter code: Adenosylcobinamide-GDP ribazoletransferase (252 aa).

7 consecutive transmembrane segments (helical) span residues 4–24, 38–58, 60–80, 113–133, 141–161, 190–210, and 232–252; these read LFKGLMMSLSMFTIIPMPYVE, PIIGLIVGCVWFLGYKLINYL, ISIVLKSALIMIIPFIITGML, FSVISVIILFFIQFGAVHSFL, ILMFLPIISRNIVAYFFITII, LVCILFGSILGYIGIAILLIV, and VAGFSLVVGEIVGLFSACLFT.

This sequence belongs to the CobS family. Requires Mg(2+) as cofactor.

The protein localises to the cell membrane. It catalyses the reaction alpha-ribazole + adenosylcob(III)inamide-GDP = adenosylcob(III)alamin + GMP + H(+). The catalysed reaction is alpha-ribazole 5'-phosphate + adenosylcob(III)inamide-GDP = adenosylcob(III)alamin 5'-phosphate + GMP + H(+). It functions in the pathway cofactor biosynthesis; adenosylcobalamin biosynthesis; adenosylcobalamin from cob(II)yrinate a,c-diamide: step 7/7. Joins adenosylcobinamide-GDP and alpha-ribazole to generate adenosylcobalamin (Ado-cobalamin). Also synthesizes adenosylcobalamin 5'-phosphate from adenosylcobinamide-GDP and alpha-ribazole 5'-phosphate. The sequence is that of Adenosylcobinamide-GDP ribazoletransferase from Clostridium botulinum (strain Alaska E43 / Type E3).